A 33-amino-acid polypeptide reads, in one-letter code: NVVVLATGGTIAGAGTNAFASQXGPLGMVVEGK.

The 33-residue stretch at 1 to 33 folds into the Asparaginase/glutaminase domain; the sequence is NVVVLATGGTIAGAGTNAFASQXGPLGMVVEGK. Residue threonine 10 is the Acyl-ester intermediate of the active site.

This sequence belongs to the asparaginase 1 family. As to quaternary structure, homotetramer.

The protein resides in the periplasm. It carries out the reaction L-glutamine + H2O = L-glutamate + NH4(+). The catalysed reaction is L-asparagine + H2O = L-aspartate + NH4(+). The polypeptide is Glutaminase-asparaginase (ansB) (Delftia acidovorans (Pseudomonas acidovorans)).